The following is a 127-amino-acid chain: uncharacterized protein (127 aa).

A helical transmembrane segment spans residues 84 to 103 (IALLSLFISLSIRITCFPFF).

It localises to the membrane. This is an uncharacterized protein from Saccharomyces cerevisiae (strain ATCC 204508 / S288c) (Baker's yeast).